Reading from the N-terminus, the 338-residue chain is S-adenosylmethionine:tRNA ribosyltransferase-isomerase (338 aa).

The protein belongs to the QueA family. As to quaternary structure, monomer.

It is found in the cytoplasm. The enzyme catalyses 7-aminomethyl-7-carbaguanosine(34) in tRNA + S-adenosyl-L-methionine = epoxyqueuosine(34) in tRNA + adenine + L-methionine + 2 H(+). It participates in tRNA modification; tRNA-queuosine biosynthesis. Transfers and isomerizes the ribose moiety from AdoMet to the 7-aminomethyl group of 7-deazaguanine (preQ1-tRNA) to give epoxyqueuosine (oQ-tRNA). This is S-adenosylmethionine:tRNA ribosyltransferase-isomerase from Francisella tularensis subsp. holarctica (strain FTNF002-00 / FTA).